The following is a 61-amino-acid chain: Aerolysin regulatory protein (61 aa).

Over residues 1-14 (MMIKRHLPQPRHRE) the composition is skewed to basic residues. Residues 1–61 (MMIKRHLPQP…GQTHTGPQIR (61 aa)) are disordered. Positions 51–61 (DGQTHTGPQIR) are enriched in polar residues.

In terms of biological role, regulation of the expression of aerolysin. This is Aerolysin regulatory protein (aerC) from Aeromonas sobria.